The primary structure comprises 213 residues: MKPYQRQFIEFALSKQVLKFGEFTLKSGRKSPYFFNAGLFNTGRDLALLGRFYAEALVDSGIEFDLLFGPAYKGIPIATTTAVALAEHHDLDLPYCFNRKEAKDHGEGGNLVGSALQGRVMLVDDVITAGTAIRESMEIIQANGATLAGVLISLDRQERGRGEISAIQEVERDYNCKVISIITLKDLIAYLEEKPEMAEHLAAVKAYREEFGV.

Lys-26 provides a ligand contact to 5-phospho-alpha-D-ribose 1-diphosphate. 34-35 (FF) is a binding site for orotate. 5-phospho-alpha-D-ribose 1-diphosphate is bound by residues 72 to 73 (YK), Arg-99, Lys-100, Lys-103, His-105, and 124 to 132 (DDVITAGTA). Thr-128 and Arg-156 together coordinate orotate.

The protein belongs to the purine/pyrimidine phosphoribosyltransferase family. PyrE subfamily. As to quaternary structure, homodimer. Mg(2+) is required as a cofactor.

It catalyses the reaction orotidine 5'-phosphate + diphosphate = orotate + 5-phospho-alpha-D-ribose 1-diphosphate. It participates in pyrimidine metabolism; UMP biosynthesis via de novo pathway; UMP from orotate: step 1/2. Its function is as follows. Catalyzes the transfer of a ribosyl phosphate group from 5-phosphoribose 1-diphosphate to orotate, leading to the formation of orotidine monophosphate (OMP). In Escherichia coli O127:H6 (strain E2348/69 / EPEC), this protein is Orotate phosphoribosyltransferase.